Reading from the N-terminus, the 116-residue chain is MTSSNFPKAERLLRRPEFLQFNEGASKLHTQYFLVLLKPNEGTGTRVGFTVSKKVGNAVVRNSIKRRLREFYRQNKSLFISADINIVAKKGADVLDFHQISTELAAAFGRLRKKYA.

The protein belongs to the RnpA family. As to quaternary structure, consists of a catalytic RNA component (M1 or rnpB) and a protein subunit.

The catalysed reaction is Endonucleolytic cleavage of RNA, removing 5'-extranucleotides from tRNA precursor.. In terms of biological role, RNaseP catalyzes the removal of the 5'-leader sequence from pre-tRNA to produce the mature 5'-terminus. It can also cleave other RNA substrates such as 4.5S RNA. The protein component plays an auxiliary but essential role in vivo by binding to the 5'-leader sequence and broadening the substrate specificity of the ribozyme. This chain is Ribonuclease P protein component, found in Citrifermentans bemidjiense (strain ATCC BAA-1014 / DSM 16622 / JCM 12645 / Bem) (Geobacter bemidjiensis).